Here is a 518-residue protein sequence, read N- to C-terminus: Wax ester synthase/diacylglycerol acyltransferase 6 (518 aa).

A compositionally biased stretch (basic and acidic residues) spans 1-17 (MEIKTRRDTSETSVRKD). The tract at residues 1 to 29 (MEIKTRRDTSETSVRKDDEEEVEEEQPLS) is disordered. Topologically, residues 1–213 (MEIKTRRDTS…LMAGSRGDSR (213 aa)) are cytoplasmic. Catalysis depends on His-163, which acts as the Proton acceptor. The disordered stretch occupies residues 185 to 205 (PDELPSLPNQNRSSSRSSRLM). A helical transmembrane segment spans residues 214–234 (FLWLVMVIWSAIMLVLNTVCD). Residues 235-518 (ALEFIATTMF…VQERDSRSLD (284 aa)) lie on the Lumenal side of the membrane. Asn-430 carries N-linked (GlcNAc...) asparagine glycosylation.

This sequence in the N-terminal section; belongs to the long-chain O-acyltransferase family. Expressed in roots, stems, leaves, flowers and siliques.

Its subcellular location is the cell membrane. The protein localises to the endoplasmic reticulum membrane. It is found in the golgi apparatus membrane. The enzyme catalyses an acyl-CoA + a 1,2-diacyl-sn-glycerol = a triacyl-sn-glycerol + CoA. It catalyses the reaction a long chain fatty alcohol + a fatty acyl-CoA = a wax ester + CoA. The protein operates within glycerolipid metabolism; triacylglycerol biosynthesis. It functions in the pathway lipid metabolism. Its function is as follows. Bifunctional wax ester synthase/diacylglycerol acyltransferase that uses acyl-CoAs with 16, 18 and 20 carbons as substrates, preferably in combination with 16:0ol alcohol. Involved in cuticular wax biosynthesis. The chain is Wax ester synthase/diacylglycerol acyltransferase 6 from Arabidopsis thaliana (Mouse-ear cress).